The sequence spans 193 residues: AP-3 complex subunit sigma-2 (193 aa).

The protein belongs to the adaptor complexes small subunit family. In terms of assembly, adaptor protein complex 3 (AP-3) is a heterotetramer composed of two large adaptins (delta-type subunit AP3D1 and beta-type subunit AP3B1 or AP3B2), a medium adaptin (mu-type subunit AP3M1 or AP3M2) and a small adaptin (sigma-type subunit APS1 or AP3S2). Interacts with AGAP1. AP-3 associates with the BLOC-1 complex.

It is found in the golgi apparatus. It localises to the cytoplasmic vesicle membrane. Its function is as follows. Part of the AP-3 complex, an adaptor-related complex which is not clathrin-associated. The complex is associated with the Golgi region as well as more peripheral structures. It facilitates the budding of vesicles from the Golgi membrane and may be directly involved in trafficking to lysosomes. In concert with the BLOC-1 complex, AP-3 is required to target cargos into vesicles assembled at cell bodies for delivery into neurites and nerve terminals. The protein is AP-3 complex subunit sigma-2 (AP3S2) of Bos taurus (Bovine).